A 150-amino-acid polypeptide reads, in one-letter code: 3-hydroxyacyl-[acyl-carrier-protein] dehydratase FabZ (150 aa).

Residue H53 is part of the active site.

This sequence belongs to the thioester dehydratase family. FabZ subfamily.

The protein resides in the cytoplasm. The catalysed reaction is a (3R)-hydroxyacyl-[ACP] = a (2E)-enoyl-[ACP] + H2O. Its function is as follows. Involved in unsaturated fatty acids biosynthesis. Catalyzes the dehydration of short chain beta-hydroxyacyl-ACPs and long chain saturated and unsaturated beta-hydroxyacyl-ACPs. In Proteus mirabilis (strain HI4320), this protein is 3-hydroxyacyl-[acyl-carrier-protein] dehydratase FabZ.